We begin with the raw amino-acid sequence, 221 residues long: Glutathione peroxidase 6 (221 aa).

The first 19 residues, 1-19 (MFQQFQASCLVLFFLVGFA), serve as a signal peptide directing secretion. Sec-73 is an active-site residue. Residue Sec-73 is a non-standard amino acid, selenocysteine.

Belongs to the glutathione peroxidase family. Expressed in olfactory epithelium and embryos.

Its subcellular location is the secreted. It carries out the reaction 2 glutathione + H2O2 = glutathione disulfide + 2 H2O. In Homo sapiens (Human), this protein is Glutathione peroxidase 6 (GPX6).